The primary structure comprises 70 residues: uncharacterized protein (70 aa).

The interval 40-70 is disordered; it reads LHQQRTAHKVTSPPSQRPQNSETKSDSQNRS. Residues 51 to 61 show a composition bias toward polar residues; that stretch reads SPPSQRPQNSE.

This is an uncharacterized protein from Bdellovibrio phage phiMH2K (Bacteriophage phiMH2K).